The sequence spans 337 residues: Glyceraldehyde-3-phosphate dehydrogenase (337 aa).

NAD(+) is bound by residues 13 to 14 (RI), Asp35, and Arg80. Residues 150-152 (SCT), Thr181, 210-211 (TG), and Arg233 contribute to the D-glyceraldehyde 3-phosphate site. The active-site Nucleophile is the Cys151. Asn315 serves as a coordination point for NAD(+).

It belongs to the glyceraldehyde-3-phosphate dehydrogenase family. Homotetramer.

The protein localises to the cytoplasm. It catalyses the reaction D-glyceraldehyde 3-phosphate + phosphate + NAD(+) = (2R)-3-phospho-glyceroyl phosphate + NADH + H(+). The protein operates within carbohydrate degradation; glycolysis; pyruvate from D-glyceraldehyde 3-phosphate: step 1/5. This Colletotrichum lindemuthianum (Bean anthracnose fungus) protein is Glyceraldehyde-3-phosphate dehydrogenase (GPDA).